The sequence spans 590 residues: G protein-coupled receptor kinase 5 (590 aa).

The interval 1-185 (MELENIVANT…LERQPVTKNT (185 aa)) is N-terminal. Positions 20-39 (GGKRKGKSKKWKEILKFPHI) are interaction with calmodulin. Positions 53-171 (YCSLCDKQPI…LDSMFFDRFL (119 aa)) constitute an RGS domain. A Protein kinase domain is found at 186 to 448 (FRQYRVLGKG…AAEVKRHPFF (263 aa)). ATP contacts are provided by residues 192-200 (LGKGGFGEV) and lysine 215. The Proton acceptor role is filled by aspartate 311. The Nuclear localization signal motif lies at 388–395 (RKEKVKRE). The 66-residue stretch at 449–514 (RNMNFKRLEA…GSVSIPWQNE (66 aa)) folds into the AGC-kinase C-terminal domain. At serine 484 the chain carries Phosphoserine; by autocatalysis. The residue at position 485 (threonine 485) is a Phosphothreonine; by autocatalysis. Residues 531–590 (GTLPPDLNRNHPPEPPKKGLLQRLFKRQHQNNSKSSPSSKTSFNHHINSNHVSSNSTGSS) are disordered. Basic and acidic residues predominate over residues 538–547 (NRNHPPEPPK). Residues 546–565 (PKKGLLQRLFKRQHQNNSKS) are sufficient for membrane localization. Low complexity predominate over residues 563–590 (SKSSPSSKTSFNHHINSNHVSSNSTGSS). Serine 579 carries the post-translational modification Phosphoserine.

This sequence belongs to the protein kinase superfamily. AGC Ser/Thr protein kinase family. GPRK subfamily. In terms of assembly, interacts with ST13 (via the C-terminus 303-319 AA). Interacts with TP53/p53. Interacts with HTR4 (via C-terminus 330-346 AA); this interaction is promoted by 5-HT (serotonin). Interacts with HDAC5. Interacts with GIT1. Post-translationally, autophosphorylated. Autophosphorylation may play a critical role in the regulation of GRK5 kinase activity. As to expression, highest levels in heart, placenta, lung &gt; skeletal muscle &gt; brain, liver, pancreas &gt; kidney.

It localises to the cytoplasm. The protein localises to the nucleus. The protein resides in the cell membrane. It carries out the reaction [G-protein-coupled receptor] + ATP = [G-protein-coupled receptor]-phosphate + ADP + H(+). Inhibited by calmodulin with an IC(50) of 50 nM. Calmodulin inhibits GRK5 association with receptor and phospholipid. Its function is as follows. Serine/threonine kinase that phosphorylates preferentially the activated forms of a variety of G-protein-coupled receptors (GPCRs). Such receptor phosphorylation initiates beta-arrestin-mediated receptor desensitization, internalization, and signaling events leading to their down-regulation. Phosphorylates a variety of GPCRs, including adrenergic receptors, muscarinic acetylcholine receptors (more specifically Gi-coupled M2/M4 subtypes), dopamine receptors and opioid receptors. In addition to GPCRs, also phosphorylates various substrates: Hsc70-interacting protein/ST13, TP53/p53, HDAC5, and arrestin-1/ARRB1. Phosphorylation of ARRB1 by GRK5 inhibits G-protein independent MAPK1/MAPK3 signaling downstream of 5HT4-receptors. Phosphorylation of HDAC5, a repressor of myocyte enhancer factor 2 (MEF2) leading to nuclear export of HDAC5 and allowing MEF2-mediated transcription. Phosphorylation of TP53/p53, a crucial tumor suppressor, inhibits TP53/p53-mediated apoptosis. Phosphorylation of ST13 regulates internalization of the chemokine receptor. Phosphorylates rhodopsin (RHO) (in vitro) and a non G-protein-coupled receptor, LRP6 during Wnt signaling (in vitro). The chain is G protein-coupled receptor kinase 5 (GRK5) from Homo sapiens (Human).